The sequence spans 130 residues: Small ribosomal subunit protein eS8 (130 aa).

This sequence belongs to the eukaryotic ribosomal protein eS8 family. Part of the 30S ribosomal subunit.

This is Small ribosomal subunit protein eS8 from Ignicoccus hospitalis (strain KIN4/I / DSM 18386 / JCM 14125).